The following is a 250-amino-acid chain: Probable transcriptional regulatory protein Mkms_2298 (250 aa).

Belongs to the TACO1 family.

It is found in the cytoplasm. The protein is Probable transcriptional regulatory protein Mkms_2298 of Mycobacterium sp. (strain KMS).